Consider the following 546-residue polypeptide: Fusion glycoprotein F0 (546 aa).

Positions 1–26 (MATQEVRLKCLLCGIIVLVLSLEGLG) are cleaved as a signal peptide. Topologically, residues 27–494 (ILHYEKLSKI…NPSLISMLSM (468 aa)) are extracellular. 3 N-linked (GlcNAc...) asparagine; by host glycosylation sites follow: Asn64, Asn67, and Asn99. Residues 110 to 134 (LAGVVMAGIAIGIATAAQITAGVAL) form a fusion peptide region. Residues 135 to 163 (YEAMKNADNINKLKSSIESTNEAVVKLQE) adopt a coiled-coil conformation. Intrachain disulfides connect Cys331–Cys340, Cys355–Cys363, Cys387–Cys392, and Cys394–Cys417. Residues Asn414 and Asn464 are each glycosylated (N-linked (GlcNAc...) asparagine; by host). A coiled-coil region spans residues 459–484 (QISSMNQSLQQSKDYIKEAQKILDTV). Residues 495 to 515 (IILYVLSIAALCIGLITFISF) traverse the membrane as a helical segment. Over 516 to 546 (VIVEKKRGNYSRLDDRQVRPVSNGDLYYIGT) the chain is Cytoplasmic.

Belongs to the paramyxoviruses fusion glycoprotein family. Homotrimer of disulfide-linked F1-F2. In terms of processing, the inactive precursor F0 is glycosylated and proteolytically cleaved into F1 and F2 to be functionally active. The cleavage is mediated by cellular proteases during the transport and maturation of the polypeptide.

The protein resides in the virion membrane. It is found in the host cell membrane. Class I viral fusion protein. Under the current model, the protein has at least 3 conformational states: pre-fusion native state, pre-hairpin intermediate state, and post-fusion hairpin state. During viral and plasma cell membrane fusion, the heptad repeat (HR) regions assume a trimer-of-hairpins structure, positioning the fusion peptide in close proximity to the C-terminal region of the ectodomain. The formation of this structure appears to drive apposition and subsequent fusion of viral and plasma cell membranes. Directs fusion of viral and cellular membranes leading to delivery of the nucleocapsid into the cytoplasm. This fusion is pH independent and occurs directly at the outer cell membrane. The trimer of F1-F2 (F protein) probably interacts with G at the virion surface. Upon G binding to its cellular receptor, the hydrophobic fusion peptide is unmasked and interacts with the cellular membrane, inducing the fusion between cell and virion membranes. Later in infection, F proteins expressed at the plasma membrane of infected cells could mediate fusion with adjacent cells to form syncytia, a cytopathic effect that could lead to tissue necrosis. The chain is Fusion glycoprotein F0 (F) from Hendra virus (isolate Horse/Autralia/Hendra/1994).